Consider the following 578-residue polypeptide: 2-succinyl-5-enolpyruvyl-6-hydroxy-3-cyclohexene-1-carboxylate synthase (578 aa).

Positions 186–208 (LPAAGGEHHPAEPRSTPWDGPVP) are disordered.

Belongs to the TPP enzyme family. MenD subfamily. As to quaternary structure, homodimer. The cofactor is Mg(2+). Requires Mn(2+) as cofactor. Thiamine diphosphate is required as a cofactor.

The catalysed reaction is isochorismate + 2-oxoglutarate + H(+) = 5-enolpyruvoyl-6-hydroxy-2-succinyl-cyclohex-3-ene-1-carboxylate + CO2. It functions in the pathway quinol/quinone metabolism; 1,4-dihydroxy-2-naphthoate biosynthesis; 1,4-dihydroxy-2-naphthoate from chorismate: step 2/7. The protein operates within cofactor biosynthesis; phylloquinone biosynthesis. Functionally, catalyzes the thiamine diphosphate-dependent decarboxylation of 2-oxoglutarate and the subsequent addition of the resulting succinic semialdehyde-thiamine pyrophosphate anion to isochorismate to yield 2-succinyl-5-enolpyruvyl-6-hydroxy-3-cyclohexene-1-carboxylate (SEPHCHC). This Synechococcus sp. (strain WH7803) protein is 2-succinyl-5-enolpyruvyl-6-hydroxy-3-cyclohexene-1-carboxylate synthase.